The chain runs to 210 residues: Cytochrome c biogenesis ATP-binding export protein CcmA (210 aa).

Positions 3 to 205 (LHLQAAGLAC…KPSGYRELNL (203 aa)) constitute an ABC transporter domain. 37–44 (GPNGSGKT) contacts ATP.

It belongs to the ABC transporter superfamily. CcmA exporter (TC 3.A.1.107) family. The complex is composed of two ATP-binding proteins (CcmA) and two transmembrane proteins (CcmB).

It localises to the cell inner membrane. The catalysed reaction is heme b(in) + ATP + H2O = heme b(out) + ADP + phosphate + H(+). Functionally, part of the ABC transporter complex CcmAB involved in the biogenesis of c-type cytochromes; once thought to export heme, this seems not to be the case, but its exact role is uncertain. Responsible for energy coupling to the transport system. This Pseudomonas putida (strain GB-1) protein is Cytochrome c biogenesis ATP-binding export protein CcmA.